Reading from the N-terminus, the 87-residue chain is NADH dehydrogenase [ubiquinone] 1 alpha subcomplex subunit 4-like 2 (87 aa).

Belongs to the complex I NDUFA4 subunit family.

This chain is NADH dehydrogenase [ubiquinone] 1 alpha subcomplex subunit 4-like 2 (NDUFA4L2), found in Bos taurus (Bovine).